We begin with the raw amino-acid sequence, 398 residues long: Lymphocyte transmembrane adapter 1 (398 aa).

The Extracellular portion of the chain corresponds to 1–37; it reads MDGVTPTLSTIRGRTLESSTLHVTPRSLDRNKDQITN. A helical; Signal-anchor for type III membrane protein transmembrane segment spans residues 38–58; that stretch reads IFSGFAGLLAILLVVAVFCIL. The Cytoplasmic portion of the chain corresponds to 59–398; sequence WNWNKRKKRQ…GPGTQLLPDE (340 aa). Tyrosine 193 carries the post-translational modification Phosphotyrosine. The tract at residues 228-261 is disordered; the sequence is TEERDEGCGDAGDCTSLYSPGAEDSDSLSNGEGS. Phosphotyrosine occurs at positions 268 and 294. The tract at residues 298–330 is disordered; that stretch reads PAADPSGSQQQAEKDVPSSNIGHVEDKTDDPGT. Over residues 303-318 the composition is skewed to polar residues; sequence SGSQQQAEKDVPSSNI. Over residues 320–329 the composition is skewed to basic and acidic residues; the sequence is HVEDKTDDPG. Phosphotyrosine is present on residues tyrosine 345 and tyrosine 373. The interval 347-398 is disordered; sequence DFQPFTQSEDSQMKHREEMSNEDSSDYENVLTAKLGGRDSEQGPGTQLLPDE.

When phosphorylated, interacts with GRB2, PIK3R1 and GRAP2. Phosphorylated on tyrosines by Syk, Lck or ZAP70 upon TCR or BCR activation; which leads to the recruitment of GRB2, PIK3R1 and GRAP2. As to expression, expressed in spleen, thymus, and peripheral blood leukocytes. Expressed in several B-, T-, NK and monocyte cell lines.

The protein localises to the cell membrane. Negatively regulates TCR (T-cell antigen receptor)-mediated signaling in T-cells and BCR (B-cell antigen receptor)-mediated signaling in B-cells. In Homo sapiens (Human), this protein is Lymphocyte transmembrane adapter 1 (LAX1).